The sequence spans 155 residues: Ribonuclease 8 (155 aa).

A signal peptide spans Met-1–Ala-28. 3 cysteine pairs are disulfide-bonded: Cys-65-Cys-119, Cys-83-Cys-134, and Cys-90-Cys-97. Residues Lys-66–Thr-70 and Lys-91 contribute to the substrate site. His-150 functions as the Proton donor in the catalytic mechanism.

It belongs to the pancreatic ribonuclease family.

It localises to the secreted. Has a low ribonuclease activity. The sequence is that of Ribonuclease 8 (RNASE8) from Saguinus oedipus (Cotton-top tamarin).